The sequence spans 127 residues: Large ribosomal subunit protein uL24B (127 aa).

Belongs to the universal ribosomal protein uL24 family. In terms of assembly, component of the large ribosomal subunit (LSU). Mature yeast ribosomes consist of a small (40S) and a large (60S) subunit. The 40S small subunit contains 1 molecule of ribosomal RNA (18S rRNA) and 33 different proteins (encoded by 57 genes). The large 60S subunit contains 3 rRNA molecules (25S, 5.8S and 5S rRNA) and 46 different proteins (encoded by 81 genes).

It localises to the cytoplasm. Its function is as follows. Component of the ribosome, a large ribonucleoprotein complex responsible for the synthesis of proteins in the cell. The small ribosomal subunit (SSU) binds messenger RNAs (mRNAs) and translates the encoded message by selecting cognate aminoacyl-transfer RNA (tRNA) molecules. The large subunit (LSU) contains the ribosomal catalytic site termed the peptidyl transferase center (PTC), which catalyzes the formation of peptide bonds, thereby polymerizing the amino acids delivered by tRNAs into a polypeptide chain. The nascent polypeptides leave the ribosome through a tunnel in the LSU and interact with protein factors that function in enzymatic processing, targeting, and the membrane insertion of nascent chains at the exit of the ribosomal tunnel. In Saccharomyces cerevisiae (strain ATCC 204508 / S288c) (Baker's yeast), this protein is Large ribosomal subunit protein uL24B.